Reading from the N-terminus, the 203-residue chain is Probable nicotinate-nucleotide adenylyltransferase (203 aa).

It belongs to the NadD family.

The enzyme catalyses nicotinate beta-D-ribonucleotide + ATP + H(+) = deamido-NAD(+) + diphosphate. Its pathway is cofactor biosynthesis; NAD(+) biosynthesis; deamido-NAD(+) from nicotinate D-ribonucleotide: step 1/1. Functionally, catalyzes the reversible adenylation of nicotinate mononucleotide (NaMN) to nicotinic acid adenine dinucleotide (NaAD). This chain is Probable nicotinate-nucleotide adenylyltransferase, found in Dictyoglomus turgidum (strain DSM 6724 / Z-1310).